Consider the following 130-residue polypeptide: Ribosome-binding factor A (130 aa).

It belongs to the RbfA family. As to quaternary structure, monomer. Binds 30S ribosomal subunits, but not 50S ribosomal subunits or 70S ribosomes.

It is found in the cytoplasm. Its function is as follows. One of several proteins that assist in the late maturation steps of the functional core of the 30S ribosomal subunit. Associates with free 30S ribosomal subunits (but not with 30S subunits that are part of 70S ribosomes or polysomes). Required for efficient processing of 16S rRNA. May interact with the 5'-terminal helix region of 16S rRNA. This Lachnospira eligens (strain ATCC 27750 / DSM 3376 / VPI C15-48 / C15-B4) (Eubacterium eligens) protein is Ribosome-binding factor A.